Reading from the N-terminus, the 1491-residue chain is Chromosome partition protein MukB (1491 aa).

34-41 provides a ligand contact to ATP; that stretch reads GGNGAGKS. Coiled-coil stretches lie at residues 302–450, 490–600, 781–806, 836–1109, and 1210–1239; these read LIEQ…LKAE, ARSE…RFES, RAAREQRLELLREERDDVVEQHAKAS, EQAL…DLRT, and VEAIEEMEVELARLTEELTQREQRLAISSD. Positions 667 to 784 are flexible hinge; that stretch reads PGGSNDPRLK…AIPLFGRAAR (118 aa). The disordered stretch occupies residues 1059-1080; sequence QRRRDELQERLHTSRSRKSEYE.

It belongs to the SMC family. MukB subfamily. As to quaternary structure, homodimerization via its hinge domain. Binds to DNA via its C-terminal region. Interacts, and probably forms a ternary complex, with MukE and MukF via its C-terminal region. The complex formation is stimulated by calcium or magnesium. Interacts with tubulin-related protein FtsZ.

The protein localises to the cytoplasm. It is found in the nucleoid. Functionally, plays a central role in chromosome condensation, segregation and cell cycle progression. Functions as a homodimer, which is essential for chromosome partition. Involved in negative DNA supercoiling in vivo, and by this means organize and compact chromosomes. May achieve or facilitate chromosome segregation by condensation DNA from both sides of a centrally located replisome during cell division. This Vibrio cholerae serotype O1 (strain ATCC 39315 / El Tor Inaba N16961) protein is Chromosome partition protein MukB.